Consider the following 474-residue polypeptide: Sensor protein CreC (474 aa).

The Periplasmic segment spans residues 1–6 (MRIGMR). The chain crosses the membrane as a helical span at residues 7 to 27 (LLLGYFLLVAVAAWFVLAIFV). Residues 28–146 (KEVKPGVRRA…LQNPADPESS (119 aa)) lie on the Cytoplasmic side of the membrane. The helical transmembrane segment at 147–167 (VMYVAAPIMDGSRLIGVLSVG) threads the bilayer. At 168–183 (KPNAAMAPVIKRSERR) the chain is on the periplasmic side. A helical membrane pass occupies residues 184 to 204 (ILWASAILLGIALVIGAGMVW). The HAMP domain maps to 205-255 (WINRSIARLTRYADSVTDNKPVPLPDLGSSELRKLAQALESMRVKLEGKNY). Residues 205–474 (WINRSIARLT…ASLRLHRHFT (270 aa)) lie on the Cytoplasmic side of the membrane. The region spanning 262-473 (ALTHELKSPL…LASLRLHRHF (212 aa)) is the Histidine kinase domain. Phosphohistidine; by autocatalysis is present on H265.

Post-translationally, autophosphorylated.

The protein localises to the cell inner membrane. It catalyses the reaction ATP + protein L-histidine = ADP + protein N-phospho-L-histidine.. Its function is as follows. Member of the two-component regulatory system CreC/CreB involved in catabolic regulation. CreC may function as a membrane-associated protein kinase that phosphorylates CreB in response to environmental signals. CreC can also phosphorylate PhoB. The polypeptide is Sensor protein CreC (creC) (Escherichia coli (strain K12)).